Consider the following 644-residue polypeptide: Macrolide export ATP-binding/permease protein MacB (644 aa).

The Cytoplasmic segment spans residues 1 to 268; sequence MNIIEIKQLN…SAIVAHKMRS (268 aa). In terms of domain architecture, ABC transporter spans 4 to 242; the sequence is IEIKQLNRYF…VKNPSVFKGR (239 aa). 40-47 contacts ATP; the sequence is GQSGSGKS. The helical transmembrane segment at 269 to 289 threads the bilayer; that stretch reads LLTMLGIIIGITSVVSVVALG. Residues 290–523 are Periplasmic-facing; sequence NGSQQKILEN…TGTMKLLISS (234 aa). Residues 524 to 544 traverse the membrane as a helical segment; that stretch reads IAFISLIVGGIGVMNIMLVSV. The Cytoplasmic portion of the chain corresponds to 545 to 573; that stretch reads TERTKEIGVRMAIGARQINILQQFLIEAV. Residues 574–594 form a helical membrane-spanning segment; the sequence is LICLIGGVAGILLSVLIGVLF. The Periplasmic portion of the chain corresponds to 595 to 607; the sequence is NSFITDFSMDFST. A helical membrane pass occupies residues 608 to 628; it reads ASIVTAVLFSTLIGVLFGYMP. Residues 629-644 are Cytoplasmic-facing; it reads AKKAAELNPITALAQE.

Belongs to the ABC transporter superfamily. Macrolide exporter (TC 3.A.1.122) family. Homodimer. Part of the tripartite efflux system MacAB-TdeA, which is composed of an inner membrane transporter, MacB, a periplasmic membrane fusion protein, MacA, and an outer membrane component, TdeA. The complex forms a large protein conduit and can translocate molecules across both the inner and outer membranes. Interacts with MacA.

It is found in the cell inner membrane. Functionally, part of the tripartite efflux system MacAB-TdeA. MacB is a non-canonical ABC transporter that contains transmembrane domains (TMD), which form a pore in the inner membrane, and an ATP-binding domain (NBD), which is responsible for energy generation. Confers resistance against macrolides. This Aggregatibacter actinomycetemcomitans (Actinobacillus actinomycetemcomitans) protein is Macrolide export ATP-binding/permease protein MacB.